A 68-amino-acid polypeptide reads, in one-letter code: ATP synthase F(0) complex subunit 8 (68 aa).

The chain crosses the membrane as a helical span at residues 8-24 (TWFTTILSMFLTLFIIF). Residue Lys54 is modified to N6-acetyllysine; alternate. Lys54 bears the N6-succinyllysine; alternate mark. Lys57 carries the post-translational modification N6-acetyllysine.

The protein belongs to the ATPase protein 8 family. As to quaternary structure, component of the ATP synthase complex composed at least of ATP5F1A/subunit alpha, ATP5F1B/subunit beta, ATP5MC1/subunit c (homooctomer), MT-ATP6/subunit a, MT-ATP8/subunit 8, ATP5ME/subunit e, ATP5MF/subunit f, ATP5MG/subunit g, ATP5MK/subunit k, ATP5MJ/subunit j, ATP5F1C/subunit gamma, ATP5F1D/subunit delta, ATP5F1E/subunit epsilon, ATP5PF/subunit F6, ATP5PB/subunit b, ATP5PD/subunit d, ATP5PO/subunit OSCP. ATP synthase complex consists of a soluble F(1) head domain (subunits alpha(3) and beta(3)) - the catalytic core - and a membrane F(0) domain - the membrane proton channel (subunits c, a, 8, e, f, g, k and j). These two domains are linked by a central stalk (subunits gamma, delta, and epsilon) rotating inside the F1 region and a stationary peripheral stalk (subunits F6, b, d, and OSCP). Interacts with PRICKLE3.

The protein resides in the mitochondrion membrane. Subunit 8, of the mitochondrial membrane ATP synthase complex (F(1)F(0) ATP synthase or Complex V) that produces ATP from ADP in the presence of a proton gradient across the membrane which is generated by electron transport complexes of the respiratory chain. ATP synthase complex consist of a soluble F(1) head domain - the catalytic core - and a membrane F(1) domain - the membrane proton channel. These two domains are linked by a central stalk rotating inside the F(1) region and a stationary peripheral stalk. During catalysis, ATP synthesis in the catalytic domain of F(1) is coupled via a rotary mechanism of the central stalk subunits to proton translocation. In vivo, can only synthesize ATP although its ATP hydrolase activity can be activated artificially in vitro. Part of the complex F(0) domain. This Hippopotamus amphibius (Hippopotamus) protein is ATP synthase F(0) complex subunit 8.